Reading from the N-terminus, the 137-residue chain is Large ribosomal subunit protein eL28 (137 aa).

Ser2 bears the N-acetylserine mark. Glycyl lysine isopeptide (Lys-Gly) (interchain with G-Cter in SUMO2) cross-links involve residues Lys58 and Lys65. The residue at position 115 (Ser115) is a Phosphoserine.

It belongs to the eukaryotic ribosomal protein eL28 family. In terms of assembly, component of the large ribosomal subunit.

The protein localises to the cytoplasm. Component of the large ribosomal subunit. The ribosome is a large ribonucleoprotein complex responsible for the synthesis of proteins in the cell. In Bos taurus (Bovine), this protein is Large ribosomal subunit protein eL28 (RPL28).